Reading from the N-terminus, the 279-residue chain is Calcium-activated potassium channel subunit beta-3 (279 aa).

The Cytoplasmic segment spans residues 1-60; the sequence is MDFSPSSELGFHFVAFILLTRHRTAFPASGKKRETDYSDGDPLDVHKRLPSSAGEDRAVM. A helical membrane pass occupies residues 61-81; sequence LGFAMMGFSVLMFFLLGTTIL. Topologically, residues 82 to 207 are extracellular; it reads KPFMLSIQRE…DVILIKKYDQ (126 aa). The N-linked (GlcNAc...) asparagine glycan is linked to Asn-131. A helical transmembrane segment spans residues 208–228; that stretch reads MAIFHCLFWPSLTLLGGALIV. Residues 229–279 are Cytoplasmic-facing; it reads GMVRLTQHLSLLCEKYSTVVRDEVGGKVPYIEQHQFKLCIMRRSKGRAEKS.

This sequence belongs to the KCNMB (TC 8.A.14.1) family. KCNMB3 subfamily. In terms of assembly, interacts with KCNMA1 tetramer. There are probably 4 molecules of KCMNB3 per KCNMA1 tetramer. In terms of processing, N-glycosylated. The extracellular domain contains disulfide bond essential for the gating mechanism. As to expression, isoform 1, isoform 3 and isoform 4 are widely expressed. Isoform 2 is expressed placenta, pancreas, kidney and heart. Isoform 1 and isoform 3 are highly expressed in pancreas and testis.

Its subcellular location is the membrane. Functionally, regulatory subunit of the calcium activated potassium KCNMA1 (maxiK) channel. Modulates the calcium sensitivity and gating kinetics of KCNMA1, thereby contributing to KCNMA1 channel diversity. Alters the functional properties of the current expressed by the KCNMA1 channel. Isoform 2, isoform 3 and isoform 4 partially inactivate the current of KCNBMA. Isoform 4 induces a fast and incomplete inactivation of KCNMA1 channel that is detectable only at large depolarizations. In contrast, isoform 1 does not induce detectable inactivation of KCNMA1. Two or more subunits of KCNMB3 are required to block the KCNMA1 tetramer. The polypeptide is Calcium-activated potassium channel subunit beta-3 (KCNMB3) (Homo sapiens (Human)).